A 588-amino-acid polypeptide reads, in one-letter code: Aspartate--tRNA(Asp/Asn) ligase (588 aa).

Residue Glu-172 coordinates L-aspartate. An aspartate region spans residues 196–199 (QLFK). Arg-218 serves as a coordination point for L-aspartate. Residues 218-220 (RDE) and Gln-227 each bind ATP. His-450 is an L-aspartate binding site. Glu-484 serves as a coordination point for ATP. Arg-491 contacts L-aspartate. 536–539 (GLDR) is a binding site for ATP.

Belongs to the class-II aminoacyl-tRNA synthetase family. Type 1 subfamily. In terms of assembly, homodimer.

It localises to the cytoplasm. The catalysed reaction is tRNA(Asx) + L-aspartate + ATP = L-aspartyl-tRNA(Asx) + AMP + diphosphate. Its function is as follows. Aspartyl-tRNA synthetase with relaxed tRNA specificity since it is able to aspartylate not only its cognate tRNA(Asp) but also tRNA(Asn). Reaction proceeds in two steps: L-aspartate is first activated by ATP to form Asp-AMP and then transferred to the acceptor end of tRNA(Asp/Asn). This Nitrosospira multiformis (strain ATCC 25196 / NCIMB 11849 / C 71) protein is Aspartate--tRNA(Asp/Asn) ligase.